The primary structure comprises 239 residues: Putative ABC transporter ATP-binding protein BR1368/BS1330_I1363 (239 aa).

An ABC transporter domain is found at 5–234; that stretch reads LSLDRVSVSR…EQVHLHYVEA (230 aa). 37 to 44 contributes to the ATP binding site; that stretch reads GDNGVGKT.

The protein belongs to the ABC transporter superfamily.

Its subcellular location is the cell inner membrane. In terms of biological role, probably part of an ABC transporter complex. Responsible for energy coupling to the transport system. The sequence is that of Putative ABC transporter ATP-binding protein BR1368/BS1330_I1363 from Brucella suis biovar 1 (strain 1330).